The primary structure comprises 365 residues: Cobalt-precorrin-5B C(1)-methyltransferase (365 aa).

The protein belongs to the CbiD family.

It carries out the reaction Co-precorrin-5B + S-adenosyl-L-methionine = Co-precorrin-6A + S-adenosyl-L-homocysteine. It participates in cofactor biosynthesis; adenosylcobalamin biosynthesis; cob(II)yrinate a,c-diamide from sirohydrochlorin (anaerobic route): step 6/10. In terms of biological role, catalyzes the methylation of C-1 in cobalt-precorrin-5B to form cobalt-precorrin-6A. This is Cobalt-precorrin-5B C(1)-methyltransferase from Clostridium perfringens (strain ATCC 13124 / DSM 756 / JCM 1290 / NCIMB 6125 / NCTC 8237 / Type A).